Consider the following 338-residue polypeptide: Glycerol-3-phosphate dehydrogenase [NAD(P)+] (338 aa).

Positions 13, 14, and 108 each coordinate NADPH. The sn-glycerol 3-phosphate site is built by Lys-108, Gly-139, and Ser-141. Ala-143 lines the NADPH pocket. Residues Lys-194, Asp-247, Ser-257, Arg-258, and Asn-259 each coordinate sn-glycerol 3-phosphate. Lys-194 serves as the catalytic Proton acceptor. Arg-258 contributes to the NADPH binding site. NADPH-binding residues include Val-282 and Glu-284.

The protein belongs to the NAD-dependent glycerol-3-phosphate dehydrogenase family.

Its subcellular location is the cytoplasm. The catalysed reaction is sn-glycerol 3-phosphate + NAD(+) = dihydroxyacetone phosphate + NADH + H(+). It catalyses the reaction sn-glycerol 3-phosphate + NADP(+) = dihydroxyacetone phosphate + NADPH + H(+). It participates in membrane lipid metabolism; glycerophospholipid metabolism. In terms of biological role, catalyzes the reduction of the glycolytic intermediate dihydroxyacetone phosphate (DHAP) to sn-glycerol 3-phosphate (G3P), the key precursor for phospholipid synthesis. The sequence is that of Glycerol-3-phosphate dehydrogenase [NAD(P)+] from Streptococcus pneumoniae (strain CGSP14).